The following is a 209-amino-acid chain: Ion-translocating oxidoreductase complex subunit G (209 aa).

Residues 9–29 (GITLAIFAALTTGLTAVVNSL) form a helical membrane-spanning segment. At T175 the chain carries FMN phosphoryl threonine.

It belongs to the RnfG family. The complex is composed of six subunits: RnfA, RnfB, RnfC, RnfD, RnfE and RnfG. FMN serves as cofactor.

The protein localises to the cell inner membrane. Its function is as follows. Part of a membrane-bound complex that couples electron transfer with translocation of ions across the membrane. The sequence is that of Ion-translocating oxidoreductase complex subunit G from Photorhabdus laumondii subsp. laumondii (strain DSM 15139 / CIP 105565 / TT01) (Photorhabdus luminescens subsp. laumondii).